Consider the following 299-residue polypeptide: uncharacterized protein (299 aa).

Transmembrane regions (helical) follow at residues 32–52 (FILLLIIIAAIPLLISYYLHL), 56–76 (SMIIFVVIYVGAALFIPSILY), 199–219 (LAIGFIILCGVIPAVAALLGA), 220–240 (YLIAVSGMLSGVAPIPPVKPE), 246–266 (FEIVQMGTAIIGALFAIPIFG), and 273–293 (FLISAVTMTIGVLAYYTILKF).

The protein localises to the cell membrane. This is an uncharacterized protein from Methanocaldococcus jannaschii (strain ATCC 43067 / DSM 2661 / JAL-1 / JCM 10045 / NBRC 100440) (Methanococcus jannaschii).